The following is a 501-amino-acid chain: Cytochrome P450 monooxygenase notH (501 aa).

A helical membrane pass occupies residues 11 to 31 (LGLESVGWVLGLLTTSILYLF). Asn-298 is a glycosylation site (N-linked (GlcNAc...) asparagine). Residue Cys-442 participates in heme binding.

It belongs to the cytochrome P450 family. It depends on heme as a cofactor.

It localises to the membrane. The protein operates within alkaloid biosynthesis. In terms of biological role, cytochrome P450 monooxygenase; part of the gene cluster that mediates the biosynthesis of notoamide, a fungal indole alkaloid that belongs to a family of natural products containing a characteristic bicyclo[2.2.2]diazaoctane core. The first step of notoamide biosynthesis involves coupling of L-proline and L-tryptophan by the bimodular NRPS notE, to produce cyclo-L-tryptophan-L-proline called brevianamide F. The reverse prenyltransferase notF then acts as a deoxybrevianamide E synthase and converts brevianamide F to deoxybrevianamide E via reverse prenylation at C-2 of the indole ring leading to the bicyclo[2.2.2]diazaoctane core. Deoxybrevianamide E is further hydroxylated at C-6 of the indole ring, likely catalyzed by the cytochrome P450 monooxygenase notG, to yield 6-hydroxy-deoxybrevianamide E. 6-hydroxy-deoxybrevianamide E is a specific substrate of the prenyltransferase notC for normal prenylation at C-7 to produce 6-hydroxy-7-prenyl-deoxybrevianamide, also called notoamide S. As the proposed pivotal branching point in notoamide biosynthesis, notoamide S can be diverted to notoamide E through an oxidative pyran ring closure putatively catalyzed by either notH cytochrome P450 monooxygenase or the notD FAD-linked oxidoreductase. This step would be followed by an indole 2,3-epoxidation-initiated pinacol-like rearrangement catalyzed by the notB FAD-dependent monooxygenase leading to the formation of notoamide C and notoamide D. On the other hand notoamide S is converted to notoamide T by notH (or notD), a bifunctional oxidase that also functions as the intramolecular Diels-Alderase responsible for generation of (+)-notoamide T. To generate antipodal (-)-notoaminide T, notH' (or notD') in Aspergillus versicolor is expected to catalyze a Diels-Alder reaction leading to the opposite stereochemistry. The remaining oxidoreductase notD (or notH) likely catalyzes the oxidative pyran ring formation to yield (+)-stephacidin A. The FAD-dependent monooxygenase notI is highly similar to notB and is predicted to catalyze a similar conversion from (+)-stephacidin A to (-)-notoamide B via the 2,3-epoxidation of (+)-stephacidin A followed by a pinacol-type rearrangement. Finally, it remains unclear which enzyme could be responsible for the final hydroxylation steps leading to notoamide A and sclerotiamide. In Aspergillus sp. (strain MF297-2), this protein is Cytochrome P450 monooxygenase notH.